Consider the following 431-residue polypeptide: RNA-binding motif, single-stranded-interacting protein 3 (431 aa).

Positions 28–53 are disordered; that stretch reads YAPAPHPMAPPSPSTNSSSNSSGEQL. Over residues 31-40 the composition is skewed to pro residues; that stretch reads APHPMAPPSP. 2 RRM domains span residues 56-129 and 135-220; these read TNLY…MAKQ and TNLY…FADG. Disordered stretches follow at residues 220 to 242 and 393 to 431; these read GGQK…PREG and TSPQ…QSKP. Over residues 401–411 the composition is skewed to low complexity; it reads SSQDSSGQQQQ.

The protein localises to the cytoplasm. Functionally, binds poly(A) and poly(U) oligoribonucleotides. In Mus musculus (Mouse), this protein is RNA-binding motif, single-stranded-interacting protein 3 (Rbms3).